Reading from the N-terminus, the 731-residue chain is 1,4-alpha-glucan branching enzyme GlgB (731 aa).

Asp411 acts as the Nucleophile in catalysis. Glu464 serves as the catalytic Proton donor.

Belongs to the glycosyl hydrolase 13 family. GlgB subfamily. Monomer.

It catalyses the reaction Transfers a segment of a (1-&gt;4)-alpha-D-glucan chain to a primary hydroxy group in a similar glucan chain.. Its pathway is glycan biosynthesis; glycogen biosynthesis. Catalyzes the formation of the alpha-1,6-glucosidic linkages in glycogen by scission of a 1,4-alpha-linked oligosaccharide from growing alpha-1,4-glucan chains and the subsequent attachment of the oligosaccharide to the alpha-1,6 position. This is 1,4-alpha-glucan branching enzyme GlgB from Mycobacterium bovis (strain ATCC BAA-935 / AF2122/97).